The chain runs to 444 residues: Transcription factor PIF5 (444 aa).

Positions 26 to 39 are involved in interaction with phyB; it reads EDELVELLWRDGQV. 2 disordered regions span residues 154–265 and 416–444; these read HCGS…NLSE and MLGFGSPAGPQSQLSAPATTDSLHMGKIG. Polar residues predominate over residues 155-171; that stretch reads CGSNQSTNIHQATTLPV. Residues 175-185 show a composition bias toward basic and acidic residues; that stretch reads DRSKNVEERLD. The segment covering 187-197 has biased composition (low complexity); it reads SSGGSSGCSYG. Polar residues predominate over residues 224-244; that stretch reads ESVSQSDIGLTSTDDQTMGNK. Residues 256-265 show a composition bias toward basic and acidic residues; the sequence is RAAEVHNLSE. The bHLH domain maps to 256-305; that stretch reads RAAEVHNLSERRRRDRINERMKALQELIPHCSRTDKASILDEAIDYLKSL. The segment covering 424-437 has biased composition (polar residues); that stretch reads GPQSQLSAPATTDS. At S437 the chain carries Phosphoserine.

Homodimer. Interacts specifically with the Pfr form of phytochrome B and with TOC1/APRR1. May form a heterodimer with PIF3. Interacts with PHYB, CRY1 and CRY2 in the nucleus in response to low blue light (LBL). Interacts with TOPP4. Associates to PTAC12/HMR/PAP5 which acts as a transcriptional coactivator. In terms of processing, phosphorylated. Additional phosphorylations induced within 60 seconds following phytochrome B photoactivation. Post-translationally, dephosphorylated by TOPP4 during photomorphogenesis, leading to subsequent degradation of PIF5 by the proteasomal pathway. As to expression, mainly expressed in leaves and seedlings, and, to a lower extent, in stems, fruits, flowers and roots.

The protein resides in the nucleus. Functionally, transcription factor acting negatively in the phytochrome B signaling pathway to promote the shade-avoidance response. Regulates PHYB abundance at the post-transcriptional level, possibly via the ubiquitin-proteasome pathway. Promotes ethylene activity in the dark. May regulate the expression of a subset of genes by binding to the G-box motif. Might be involved in the integration of light-signals to control both circadian and photomorphogenic processes. Activated by CRY1 and CRY2 in response to low blue light (LBL) by direct binding at chromatin on E-box variant 5'-CA[CT]GTG-3' to stimulate specific gene expression to adapt global physiology (e.g. hypocotyl elongation in low blue light). This Arabidopsis thaliana (Mouse-ear cress) protein is Transcription factor PIF5.